Consider the following 452-residue polypeptide: Pup--protein ligase (452 aa).

Position 9 (Glu-9) interacts with Mg(2+). Arg-53 contributes to the ATP binding site. Tyr-55 provides a ligand contact to Mg(2+). Asp-57 acts as the Proton acceptor in catalysis. Glu-63 provides a ligand contact to Mg(2+). Residues Thr-66 and Trp-419 each contribute to the ATP site.

It belongs to the Pup ligase/Pup deamidase family. Pup-conjugating enzyme subfamily.

It catalyses the reaction ATP + [prokaryotic ubiquitin-like protein]-L-glutamate + [protein]-L-lysine = ADP + phosphate + N(6)-([prokaryotic ubiquitin-like protein]-gamma-L-glutamyl)-[protein]-L-lysine.. The protein operates within protein degradation; proteasomal Pup-dependent pathway. Its pathway is protein modification; protein pupylation. Catalyzes the covalent attachment of the prokaryotic ubiquitin-like protein modifier Pup to the proteasomal substrate proteins, thereby targeting them for proteasomal degradation. This tagging system is termed pupylation. The ligation reaction involves the side-chain carboxylate of the C-terminal glutamate of Pup and the side-chain amino group of a substrate lysine. This Mycobacteroides abscessus (strain ATCC 19977 / DSM 44196 / CCUG 20993 / CIP 104536 / JCM 13569 / NCTC 13031 / TMC 1543 / L948) (Mycobacterium abscessus) protein is Pup--protein ligase.